The sequence spans 322 residues: MPVHSREKKESNHNDMEVDYPENEGSSSEEDDSDSSSGSEEGDSSEMDDEDCERRRMECLDEMSTLEKQFTDLKDQLYKERLSQVDAKLQEVKADQAQEYLEPLANLQENMQIRTKVAGIYRELCLESVKNKHDCEIQAARQHCESEKLLLYDTVQSELEEKIRRLEEDRHSIDITSELWNDELQSRRKRKDPFSPDKKKKPVVVSGPYIVYMLQDLDILEDWTTIRKAMASFGPHRVKPEVTVKIEKHQHSARSEEGRLHYDGEWYGRGQTICIDKKDEFPTSAVITTINSDEVWFKRQDGSKSKLYISQLQKGKYSIKHI.

The segment covering 1-16 (MPVHSREKKESNHNDM) has biased composition (basic and acidic residues). Positions 1-56 (MPVHSREKKESNHNDMEVDYPENEGSSSEEDDSDSSSGSEEGDSSEMDDEDCERRR) are disordered. Residues 17 to 51 (EVDYPENEGSSSEEDDSDSSSGSEEGDSSEMDDED) are compositionally biased toward acidic residues. 2 coiled-coil regions span residues 50-99 (EDCE…QAQE) and 147-178 (EKLL…ITSE).

It belongs to the BRMS1 family.

The protein resides in the nucleus. Involved in the histone deacetylase (HDAC1)-dependent transcriptional repression activity. The sequence is that of Breast cancer metastasis-suppressor 1-like protein (brms1l) from Xenopus laevis (African clawed frog).